Reading from the N-terminus, the 426-residue chain is Proline--tRNA ligase (426 aa).

The protein belongs to the class-II aminoacyl-tRNA synthetase family. ProS type 2 subfamily. In terms of assembly, homodimer.

It is found in the cytoplasm. It catalyses the reaction tRNA(Pro) + L-proline + ATP = L-prolyl-tRNA(Pro) + AMP + diphosphate. Functionally, catalyzes the attachment of proline to tRNA(Pro) in a two-step reaction: proline is first activated by ATP to form Pro-AMP and then transferred to the acceptor end of tRNA(Pro). In Rickettsia peacockii (strain Rustic), this protein is Proline--tRNA ligase.